Consider the following 170-residue polypeptide: Adenine phosphoribosyltransferase (170 aa).

This sequence belongs to the purine/pyrimidine phosphoribosyltransferase family. In terms of assembly, homodimer.

It is found in the cytoplasm. The enzyme catalyses AMP + diphosphate = 5-phospho-alpha-D-ribose 1-diphosphate + adenine. Its pathway is purine metabolism; AMP biosynthesis via salvage pathway; AMP from adenine: step 1/1. Functionally, catalyzes a salvage reaction resulting in the formation of AMP, that is energically less costly than de novo synthesis. The sequence is that of Adenine phosphoribosyltransferase from Lactococcus lactis subsp. cremoris (strain SK11).